We begin with the raw amino-acid sequence, 339 residues long: DNA-directed RNA polymerase subunit alpha (339 aa).

The interval Met-1 to Glu-235 is alpha N-terminal domain (alpha-NTD). An alpha C-terminal domain (alpha-CTD) region spans residues Phe-251–Tyr-339.

It belongs to the RNA polymerase alpha chain family. In terms of assembly, homodimer. The RNAP catalytic core consists of 2 alpha, 1 beta, 1 beta' and 1 omega subunit. When a sigma factor is associated with the core the holoenzyme is formed, which can initiate transcription.

It catalyses the reaction RNA(n) + a ribonucleoside 5'-triphosphate = RNA(n+1) + diphosphate. In terms of biological role, DNA-dependent RNA polymerase catalyzes the transcription of DNA into RNA using the four ribonucleoside triphosphates as substrates. The polypeptide is DNA-directed RNA polymerase subunit alpha (Methylobacterium nodulans (strain LMG 21967 / CNCM I-2342 / ORS 2060)).